Reading from the N-terminus, the 552-residue chain is Chromosomal replication initiator protein DnaA (552 aa).

Residues 1 to 90 are domain I, interacts with DnaA modulators; it reads MWNETWNEIT…FTVAVTVDPT (90 aa). The domain II stretch occupies residues 90–210; that stretch reads TLDVIQDLPH…KPAHDPDRNG (121 aa). Positions 113-213 are disordered; it reads EHPHYSPVSQ…HDPDRNGSLN (101 aa). Low complexity predominate over residues 155-170; it reads PQPSQSSQSAQQQPAQ. Residues 211–427 are domain III, AAA+ region; the sequence is SLNPRYTFDT…GAFIRVSAYA (217 aa). ATP-binding residues include Gly255, Gly257, Lys258, and Thr259. The tract at residues 428–552 is domain IV, binds dsDNA; the sequence is SLNEAPINMA…TQQIKSSDRA (125 aa).

This sequence belongs to the DnaA family. In terms of assembly, oligomerizes as a right-handed, spiral filament on DNA at oriC.

The protein resides in the cytoplasm. Plays an essential role in the initiation and regulation of chromosomal replication. ATP-DnaA binds to the origin of replication (oriC) to initiate formation of the DNA replication initiation complex once per cell cycle. Binds the DnaA box (a 9 base pair repeat at the origin) and separates the double-stranded (ds)DNA. Forms a right-handed helical filament on oriC DNA; dsDNA binds to the exterior of the filament while single-stranded (ss)DNA is stabiized in the filament's interior. The ATP-DnaA-oriC complex binds and stabilizes one strand of the AT-rich DNA unwinding element (DUE), permitting loading of DNA polymerase. After initiation quickly degrades to an ADP-DnaA complex that is not apt for DNA replication. Binds acidic phospholipids. This is Chromosomal replication initiator protein DnaA from Corynebacterium diphtheriae (strain ATCC 700971 / NCTC 13129 / Biotype gravis).